A 443-amino-acid polypeptide reads, in one-letter code: MSELKERLLPPRPASAINLRGDAGSRPSPSGRQPLLGVDVLGLKKRGQGLKSWIRVDTSANSQVIEVDKFTMMRRCDLPARDLRLLDPLFVYPSTILGREKAIVVNLEQIRCIITADEVLLLNSLDNYVLRYVVELQQRLKASSVTEVWNQDSLELSRRRSRSLDNVLQNSSPDYLPFEFRALEVALEAACTFLDSQASELEIEAYPLLDELTSKISTLNLERARRLKSRLVALTRRVQKVRDEIEQLMDDDGDMAEMYLTEKKKRMEGSLYGDQSLPVYRTNDCFSLSAPVSPVSSPPESRRLEKSLSIVRSRHDSARSSEDATENIEELEMLLEAYFVVIDSTLNKLTSLKEYIDDTEDFINIQLDNVRNQLIQFELLLTTATFVVAIFGVVAGIFGMNFEIDFFEKPGAFKWVLAITGVCGLVVFLAFLWYYKRRRLMPL.

Positions 1 to 33 (MSELKERLLPPRPASAINLRGDAGSRPSPSGRQ) are disordered. The next 2 membrane-spanning stretches (helical) occupy residues 379 to 399 (LLLT…GIFG) and 415 to 435 (WVLA…LWYY). A Required for magnesium transport activity motif is present at residues 399 to 401 (GMN).

The protein belongs to the CorA metal ion transporter (MIT) (TC 1.A.35.5) family. Expressed in the whole plant.

Its subcellular location is the cell membrane. In terms of biological role, high-affinity magnesium transporter that mediates the influx of magnesium. Involved in tolerance to Aluminum. The protein is Magnesium transporter MRS2-10 (MRS2-10) of Arabidopsis thaliana (Mouse-ear cress).